The primary structure comprises 165 residues: SsrA-binding protein (165 aa).

Belongs to the SmpB family.

The protein localises to the cytoplasm. In terms of biological role, required for rescue of stalled ribosomes mediated by trans-translation. Binds to transfer-messenger RNA (tmRNA), required for stable association of tmRNA with ribosomes. tmRNA and SmpB together mimic tRNA shape, replacing the anticodon stem-loop with SmpB. tmRNA is encoded by the ssrA gene; the 2 termini fold to resemble tRNA(Ala) and it encodes a 'tag peptide', a short internal open reading frame. During trans-translation Ala-aminoacylated tmRNA acts like a tRNA, entering the A-site of stalled ribosomes, displacing the stalled mRNA. The ribosome then switches to translate the ORF on the tmRNA; the nascent peptide is terminated with the 'tag peptide' encoded by the tmRNA and targeted for degradation. The ribosome is freed to recommence translation, which seems to be the essential function of trans-translation. This Ruthia magnifica subsp. Calyptogena magnifica protein is SsrA-binding protein.